The chain runs to 328 residues: MHPAEVFDYEDIQLVPNKCIIDSRSEADTSIEFGPRRFKIPVVPANMETVINEPLAVWLAEHDYFYVMHRFQPEDRRGFIERMQAKSLFASISVGVKPEEVTFIDELATAGLTPEYITIDIAHGHSDAVIRMIHHIKQQLPNSFVIAGNVGTPEAVRELENAGADATKVGIGPGKACITKLKTGFGTGGWQLAAVRLCAKAARKPIVADGGIRYNGDIAKSIRFGASMVMIGSMLAGHEQSPGSLLTIDGRTFKQYWGSASEKQKGAYRNVEGKQMLVPYRGDIDQTLTAMEEDLQSAISYAGGRNLLDIRTVDYVIVKSSILNGDNY.

The Thioimidate intermediate role is filled by cysteine 177. Residue 206–229 (IVADGGIRYNGDIAKSIRFGASMV) coordinates NADP(+).

Belongs to the IMPDH/GMPR family. GuaC type 2 subfamily.

The enzyme catalyses IMP + NH4(+) + NADP(+) = GMP + NADPH + 2 H(+). Functionally, catalyzes the irreversible NADPH-dependent deamination of GMP to IMP. It functions in the conversion of nucleobase, nucleoside and nucleotide derivatives of G to A nucleotides, and in maintaining the intracellular balance of A and G nucleotides. The sequence is that of GMP reductase from Levilactobacillus brevis (strain ATCC 367 / BCRC 12310 / CIP 105137 / JCM 1170 / LMG 11437 / NCIMB 947 / NCTC 947) (Lactobacillus brevis).